We begin with the raw amino-acid sequence, 690 residues long: Elongation factor G (690 aa).

The tr-type G domain occupies 8 to 283; the sequence is SKCRNIGIMA…AVVDFLPAPN (276 aa). Residues 17 to 24, 81 to 85, and 135 to 138 each bind GTP; these read AHIDAGKT, DTPGH, and NKMD.

The protein belongs to the TRAFAC class translation factor GTPase superfamily. Classic translation factor GTPase family. EF-G/EF-2 subfamily.

The protein resides in the cytoplasm. Functionally, catalyzes the GTP-dependent ribosomal translocation step during translation elongation. During this step, the ribosome changes from the pre-translocational (PRE) to the post-translocational (POST) state as the newly formed A-site-bound peptidyl-tRNA and P-site-bound deacylated tRNA move to the P and E sites, respectively. Catalyzes the coordinated movement of the two tRNA molecules, the mRNA and conformational changes in the ribosome. The protein is Elongation factor G of Ehrlichia chaffeensis (strain ATCC CRL-10679 / Arkansas).